We begin with the raw amino-acid sequence, 296 residues long: Small ribosomal subunit biogenesis GTPase RsgA (296 aa).

A CP-type G domain is found at 63–224 (RNQLVRPPVA…IADTPGFSSY (162 aa)). Residues 112 to 115 (SKTD) and 167 to 175 (GQTGAGKST) contribute to the GTP site. Positions 248, 253, 255, and 261 each coordinate Zn(2+).

The protein belongs to the TRAFAC class YlqF/YawG GTPase family. RsgA subfamily. Monomer. Associates with 30S ribosomal subunit, binds 16S rRNA. Zn(2+) serves as cofactor.

The protein localises to the cytoplasm. Functionally, one of several proteins that assist in the late maturation steps of the functional core of the 30S ribosomal subunit. Helps release RbfA from mature subunits. May play a role in the assembly of ribosomal proteins into the subunit. Circularly permuted GTPase that catalyzes slow GTP hydrolysis, GTPase activity is stimulated by the 30S ribosomal subunit. This chain is Small ribosomal subunit biogenesis GTPase RsgA, found in Limosilactobacillus reuteri (strain DSM 20016) (Lactobacillus reuteri).